Here is a 155-residue protein sequence, read N- to C-terminus: Anaerobic ribonucleoside-triphosphate reductase-activating protein (155 aa).

Residues cysteine 26, cysteine 30, and cysteine 33 each coordinate [4Fe-4S] cluster. S-adenosyl-L-methionine contacts are provided by residues 32-34 (GCY) and glycine 74.

It belongs to the organic radical-activating enzymes family. As to quaternary structure, forms a tetramer composed of two NrdD and two NrdG subunits. Requires [4Fe-4S] cluster as cofactor.

The protein resides in the cytoplasm. The enzyme catalyses glycyl-[protein] + reduced [flavodoxin] + S-adenosyl-L-methionine = glycin-2-yl radical-[protein] + semiquinone [flavodoxin] + 5'-deoxyadenosine + L-methionine + H(+). Functionally, activation of anaerobic ribonucleoside-triphosphate reductase under anaerobic conditions by generation of an organic free radical, using S-adenosylmethionine and reduced flavodoxin as cosubstrates to produce 5'-deoxy-adenosine. In Vibrio cholerae serotype O1 (strain ATCC 39315 / El Tor Inaba N16961), this protein is Anaerobic ribonucleoside-triphosphate reductase-activating protein (nrdG).